The following is a 61-amino-acid chain: Small ribosomal subunit protein uS14 (61 aa).

Positions 24, 27, 40, and 43 each coordinate Zn(2+).

It belongs to the universal ribosomal protein uS14 family. Zinc-binding uS14 subfamily. As to quaternary structure, part of the 30S ribosomal subunit. Contacts proteins S3 and S10. Zn(2+) is required as a cofactor.

Its function is as follows. Binds 16S rRNA, required for the assembly of 30S particles and may also be responsible for determining the conformation of the 16S rRNA at the A site. The protein is Small ribosomal subunit protein uS14 of Desulfitobacterium hafniense (strain Y51).